The sequence spans 158 residues: UPF0178 protein RPA2191 (158 aa).

Belongs to the UPF0178 family.

The sequence is that of UPF0178 protein RPA2191 from Rhodopseudomonas palustris (strain ATCC BAA-98 / CGA009).